Reading from the N-terminus, the 968-residue chain is Glycine dehydrogenase (decarboxylating) (968 aa).

Lys-712 bears the N6-(pyridoxal phosphate)lysine mark.

It belongs to the GcvP family. As to quaternary structure, the glycine cleavage system is composed of four proteins: P, T, L and H. It depends on pyridoxal 5'-phosphate as a cofactor.

The catalysed reaction is N(6)-[(R)-lipoyl]-L-lysyl-[glycine-cleavage complex H protein] + glycine + H(+) = N(6)-[(R)-S(8)-aminomethyldihydrolipoyl]-L-lysyl-[glycine-cleavage complex H protein] + CO2. Its function is as follows. The glycine cleavage system catalyzes the degradation of glycine. The P protein binds the alpha-amino group of glycine through its pyridoxal phosphate cofactor; CO(2) is released and the remaining methylamine moiety is then transferred to the lipoamide cofactor of the H protein. The chain is Glycine dehydrogenase (decarboxylating) from Prochlorococcus marinus (strain NATL1A).